We begin with the raw amino-acid sequence, 972 residues long: Hyaluronan synthase (972 aa).

The tract at residues 152–325 is A1; the sequence is KPEHQHVGLS…VSLDWRLEQF (174 aa). Residues 432-604 form an A2 region; it reads EDSHINRVPL…IRAWHLTDGF (173 aa).

This sequence belongs to the glycosyltransferase 2 family. CS/HAS subfamily. Mg(2+) serves as cofactor. Co(2+) is required as a cofactor.

It localises to the cell membrane. The catalysed reaction is [hyaluronan](n) + UDP-N-acetyl-alpha-D-glucosamine = N-acetyl-beta-D-glucosaminyl-(1-&gt;4)-[hyaluronan](n) + UDP + H(+). It carries out the reaction N-acetyl-beta-D-glucosaminyl-(1-&gt;4)-[hyaluronan](n) + UDP-alpha-D-glucuronate = [hyaluronan](n+1) + UDP + H(+). The enzyme catalyses 3-O-(beta-D-GalNAc-(1-&gt;4)-beta-D-GlcA-(1-&gt;3)-beta-D-Gal-(1-&gt;3)-beta-D-Gal-(1-&gt;4)-beta-D-Xyl)-L-seryl-[protein] + UDP-alpha-D-glucuronate = 3-O-(beta-D-GlcA-(1-&gt;3)-beta-D-GalNAc-(1-&gt;4)-beta-D-GlcA-(1-&gt;3)-beta-D-Gal-(1-&gt;3)-beta-D-Gal-(1-&gt;4)-beta-D-Xyl)-L-seryl-[protein] + UDP + H(+). It catalyses the reaction 3-O-{[beta-D-GalNAc-(1-&gt;4)-beta-D-GlcA-(1-&gt;3)](n)-beta-D-GalNAc-(1-&gt;4)-beta-D-GlcA-(1-&gt;3)-beta-D-Gal-(1-&gt;3)-beta-D-Gal-(1-&gt;4)-beta-D-Xyl}-L-seryl-[protein] + UDP-alpha-D-glucuronate = 3-O-{beta-D-GlcA-(1-&gt;3)-[beta-D-GalNAc-(1-&gt;4)-beta-D-GlcA-(1-&gt;3)](n)-beta-D-GalNAc-(1-&gt;4)-beta-D-GlcA-(1-&gt;3)-beta-D-Gal-(1-&gt;3)-beta-D-Gal-(1-&gt;4)-beta-D-Xyl}-L-seryl-[protein] + UDP + H(+). Functionally, catalyzes the polymerization of hyaluronan, a polysaccharide composed of a repeating disaccharide of N-acetylglucosamine (GlcNAc) and glucuronic acid (GlcUA) units. Each unit has the composition in beta-(1-&gt;4)-GlcUA-beta-(1-&gt;3)-GlcNAc. This Pasteurella multocida protein is Hyaluronan synthase (hyaD).